We begin with the raw amino-acid sequence, 391 residues long: 2-deoxy-scyllo-inosose synthase (391 aa).

Residues Asp-42, 73 to 76 (EVHK), 105 to 109 (GVTGN), 129 to 130 (TT), 140 to 142 (SLK), and 151 to 152 (KN) contribute to the NAD(+) site. Lys-142 is a catalytic residue. Glu-184 lines the Co(2+) pocket. Glu-244 is a catalytic residue. 2 residues coordinate Co(2+): His-247 and His-263.

Belongs to the sugar phosphate cyclases superfamily. DOI synthase family. The cofactor is NAD(+). Requires Co(2+) as cofactor.

It carries out the reaction D-glucose 6-phosphate = 2-deoxy-L-scyllo-inosose + phosphate. The protein operates within metabolic intermediate biosynthesis; 2-deoxystreptamine biosynthesis; 2-deoxystreptamine from D-glucose 6-phosphate: step 1/4. It participates in antibiotic biosynthesis; ribostamycin biosynthesis. Its function is as follows. Catalyzes the intramolecular carbocycle formation from D-glucose-6-phosphate to 2-deoxy-scyllo-inosose (DOI). The chain is 2-deoxy-scyllo-inosose synthase (rbmA) from Streptomyces ribosidificus.